A 75-amino-acid chain; its full sequence is DNA-directed RNA polymerase subunit omega (75 aa).

Belongs to the RNA polymerase subunit omega family. As to quaternary structure, the RNAP catalytic core consists of 2 alpha, 1 beta, 1 beta' and 1 omega subunit. When a sigma factor is associated with the core the holoenzyme is formed, which can initiate transcription.

It catalyses the reaction RNA(n) + a ribonucleoside 5'-triphosphate = RNA(n+1) + diphosphate. Functionally, promotes RNA polymerase assembly. Latches the N- and C-terminal regions of the beta' subunit thereby facilitating its interaction with the beta and alpha subunits. The sequence is that of DNA-directed RNA polymerase subunit omega from Nitratidesulfovibrio vulgaris (strain DSM 19637 / Miyazaki F) (Desulfovibrio vulgaris).